A 154-amino-acid chain; its full sequence is Large ribosomal subunit protein uL13 (154 aa).

The protein belongs to the universal ribosomal protein uL13 family. In terms of assembly, part of the 50S ribosomal subunit.

Functionally, this protein is one of the early assembly proteins of the 50S ribosomal subunit, although it is not seen to bind rRNA by itself. It is important during the early stages of 50S assembly. This is Large ribosomal subunit protein uL13 from Borrelia garinii subsp. bavariensis (strain ATCC BAA-2496 / DSM 23469 / PBi) (Borreliella bavariensis).